Here is a 420-residue protein sequence, read N- to C-terminus: uncharacterized protein (420 aa).

The TRAM domain occupies 7 to 65; the sequence is NIERGSVINVEILNAAHGGQGIAKYDGRVIFVKGAFPGDRLSANITHVKKKFARATIAS. S-adenosyl-L-methionine contacts are provided by Gln-245, Tyr-280, Glu-304, and Asp-349. The active-site Nucleophile is Cys-376.

It belongs to the class I-like SAM-binding methyltransferase superfamily. RNA M5U methyltransferase family.

This is an uncharacterized protein from Corynebacterium diphtheriae (strain ATCC 700971 / NCTC 13129 / Biotype gravis).